Consider the following 329-residue polypeptide: GTPase Obg (329 aa).

The Obg domain occupies 1 to 159 (MQFIDEAKIF…MWVWLHLKLL (159 aa)). The 168-residue stretch at 160–327 (SDVGLVGLPN…LLANILSELQ (168 aa)) folds into the OBG-type G domain. GTP-binding positions include 166 to 173 (GLPNAGKS), 191 to 195 (FTTLT), 212 to 215 (DIPG), 279 to 282 (TKTD), and 308 to 310 (SSY). 2 residues coordinate Mg(2+): Ser-173 and Thr-193.

This sequence belongs to the TRAFAC class OBG-HflX-like GTPase superfamily. OBG GTPase family. As to quaternary structure, monomer. Requires Mg(2+) as cofactor.

The protein localises to the cytoplasm. Its function is as follows. An essential GTPase which binds GTP, GDP and possibly (p)ppGpp with moderate affinity, with high nucleotide exchange rates and a fairly low GTP hydrolysis rate. Plays a role in control of the cell cycle, stress response, ribosome biogenesis and in those bacteria that undergo differentiation, in morphogenesis control. This is GTPase Obg from Orientia tsutsugamushi (strain Boryong) (Rickettsia tsutsugamushi).